Here is a 145-residue protein sequence, read N- to C-terminus: Small ribosomal subunit protein uS9 (145 aa).

The span at 1 to 13 (MATDQHSNKSNVS) shows a compositional bias: polar residues. The tract at residues 1–24 (MATDQHSNKSNVSAARKPLSPSPT) is disordered.

This sequence belongs to the universal ribosomal protein uS9 family.

It is found in the cytoplasm. The sequence is that of Small ribosomal subunit protein uS9 (RPS16) from Lupinus polyphyllus (Large-leaved lupine).